A 272-amino-acid chain; its full sequence is 2-succinyl-6-hydroxy-2,4-cyclohexadiene-1-carboxylate synthase (272 aa).

The protein belongs to the AB hydrolase superfamily. MenH family. As to quaternary structure, monomer.

It carries out the reaction 5-enolpyruvoyl-6-hydroxy-2-succinyl-cyclohex-3-ene-1-carboxylate = (1R,6R)-6-hydroxy-2-succinyl-cyclohexa-2,4-diene-1-carboxylate + pyruvate. Its pathway is quinol/quinone metabolism; 1,4-dihydroxy-2-naphthoate biosynthesis; 1,4-dihydroxy-2-naphthoate from chorismate: step 3/7. It functions in the pathway quinol/quinone metabolism; menaquinone biosynthesis. Functionally, catalyzes a proton abstraction reaction that results in 2,5-elimination of pyruvate from 2-succinyl-5-enolpyruvyl-6-hydroxy-3-cyclohexene-1-carboxylate (SEPHCHC) and the formation of 2-succinyl-6-hydroxy-2,4-cyclohexadiene-1-carboxylate (SHCHC). The protein is 2-succinyl-6-hydroxy-2,4-cyclohexadiene-1-carboxylate synthase of Yersinia pseudotuberculosis serotype I (strain IP32953).